Reading from the N-terminus, the 238-residue chain is Carboxymethylenebutenolidase (238 aa).

Catalysis depends on residues Cys123, Asp171, and His201.

The protein belongs to the dienelactone hydrolase family. As to quaternary structure, monomer.

It carries out the reaction 2-(5-oxo-2,5-dihydrofuran-2-ylidene)acetate + H2O = 4-oxohex-2-enedioate + H(+). Its pathway is aromatic compound metabolism; 3-chlorocatechol degradation. Functionally, ring cleavage of cyclic ester dienelactone to produce maleylacetate. The polypeptide is Carboxymethylenebutenolidase (tcbE) (Pseudomonas sp. (strain P51)).